The following is a 216-amino-acid chain: 3-keto-L-gulonate-6-phosphate decarboxylase UlaD (216 aa).

Asp11 contacts substrate. Residues Glu33 and Asp62 each coordinate Mg(2+). Arg192 is a binding site for substrate.

It belongs to the HPS/KGPDC family. KGPDC subfamily. Homodimer. Mg(2+) is required as a cofactor.

It carries out the reaction 3-dehydro-L-gulonate 6-phosphate + H(+) = L-xylulose 5-phosphate + CO2. Its pathway is cofactor degradation; L-ascorbate degradation; D-xylulose 5-phosphate from L-ascorbate: step 2/4. Catalyzes the decarboxylation of 3-keto-L-gulonate-6-P into L-xylulose-5-P. Is involved in the anaerobic L-ascorbate utilization. The chain is 3-keto-L-gulonate-6-phosphate decarboxylase UlaD from Salmonella typhi.